A 158-amino-acid polypeptide reads, in one-letter code: 2-C-methyl-D-erythritol 2,4-cyclodiphosphate synthase (158 aa).

Residues Asp-9 and His-11 each contribute to the a divalent metal cation site. 4-CDP-2-C-methyl-D-erythritol 2-phosphate contacts are provided by residues Asp-9 to His-11 and His-35 to Ser-36. His-43 lines the a divalent metal cation pocket. Residues Asp-57–Gly-59, Phe-62–Asp-66, Ala-101–Ala-107, Thr-133–Glu-136, Phe-140, and Arg-143 contribute to the 4-CDP-2-C-methyl-D-erythritol 2-phosphate site.

Belongs to the IspF family. Homotrimer. A divalent metal cation serves as cofactor.

It carries out the reaction 4-CDP-2-C-methyl-D-erythritol 2-phosphate = 2-C-methyl-D-erythritol 2,4-cyclic diphosphate + CMP. Its pathway is isoprenoid biosynthesis; isopentenyl diphosphate biosynthesis via DXP pathway; isopentenyl diphosphate from 1-deoxy-D-xylulose 5-phosphate: step 4/6. Functionally, involved in the biosynthesis of isopentenyl diphosphate (IPP) and dimethylallyl diphosphate (DMAPP), two major building blocks of isoprenoid compounds. Catalyzes the conversion of 4-diphosphocytidyl-2-C-methyl-D-erythritol 2-phosphate (CDP-ME2P) to 2-C-methyl-D-erythritol 2,4-cyclodiphosphate (ME-CPP) with a corresponding release of cytidine 5-monophosphate (CMP). In Vibrio cholerae serotype O1 (strain ATCC 39541 / Classical Ogawa 395 / O395), this protein is 2-C-methyl-D-erythritol 2,4-cyclodiphosphate synthase.